A 142-amino-acid polypeptide reads, in one-letter code: Hemoglobin subunit alpha (142 aa).

Ser1 is modified (N-acetylserine). Residues Ser1–Arg142 enclose the Globin domain. O2 is bound at residue His59. His88 contacts heme b.

The protein belongs to the globin family. In terms of assembly, heterotetramer of two alpha chains and two beta chains. Red blood cells.

Involved in oxygen transport from gills to the various peripheral tissues. This chain is Hemoglobin subunit alpha (hba), found in Electrophorus electricus (Electric eel).